The sequence spans 141 residues: Hemoglobin subunit alpha-A (141 aa).

Residues 1-141 (VLSAADKANV…VGAVLTAKYR (141 aa)) enclose the Globin domain. H58 serves as a coordination point for O2. Residue H87 coordinates heme b.

This sequence belongs to the globin family. In terms of assembly, heterotetramer of two alpha chains and two beta chains. As to expression, red blood cells.

Involved in oxygen transport from the lung to the various peripheral tissues. This Chloephaga melanoptera (Andean goose) protein is Hemoglobin subunit alpha-A (HBAA).